The sequence spans 231 residues: ATP-dependent dethiobiotin synthetase BioD (231 aa).

Residue 12–17 (DVGKTV) participates in ATP binding. Thr16 lines the Mg(2+) pocket. Residue Lys37 is part of the active site. Residue Thr41 coordinates substrate. ATP contacts are provided by residues Asp50, 109-112 (EGAG), 170-171 (GS), and 200-202 (PAG). Positions 50 and 109 each coordinate Mg(2+).

The protein belongs to the dethiobiotin synthetase family. Homodimer. The cofactor is Mg(2+).

Its subcellular location is the cytoplasm. The catalysed reaction is (7R,8S)-7,8-diammoniononanoate + CO2 + ATP = (4R,5S)-dethiobiotin + ADP + phosphate + 3 H(+). The protein operates within cofactor biosynthesis; biotin biosynthesis; biotin from 7,8-diaminononanoate: step 1/2. In terms of biological role, catalyzes a mechanistically unusual reaction, the ATP-dependent insertion of CO2 between the N7 and N8 nitrogen atoms of 7,8-diaminopelargonic acid (DAPA, also called 7,8-diammoniononanoate) to form a ureido ring. The polypeptide is ATP-dependent dethiobiotin synthetase BioD (Rhodococcus jostii (strain RHA1)).